A 107-amino-acid polypeptide reads, in one-letter code: U1-lycotoxin-Ls1b (107 aa).

The N-terminal stretch at 1-20 (MMKVLVVVALLATLISYSSS) is a signal peptide. The propeptide occupies 21 to 41 (EGIDDLEADELLSLMANEQTR). Cystine bridges form between Cys44-Cys59, Cys51-Cys68, Cys58-Cys86, and Cys70-Cys84.

Belongs to the neurotoxin 19 (CSTX) family. 04 (U1-Lctx) subfamily. As to expression, expressed by the venom gland.

The protein resides in the secreted. This is U1-lycotoxin-Ls1b from Lycosa singoriensis (Wolf spider).